Reading from the N-terminus, the 402-residue chain is Cysteine desulfurase NifS (402 aa).

Pyridoxal 5'-phosphate-binding positions include 72–73, N151, Q179, and 199–201; these read GT and CGH. K202 carries the post-translational modification N6-(pyridoxal phosphate)lysine. T237 contacts pyridoxal 5'-phosphate. Catalysis depends on C325, which acts as the Cysteine persulfide intermediate. [2Fe-2S] cluster is bound at residue C325.

It belongs to the class-V pyridoxal-phosphate-dependent aminotransferase family. NifS/IscS subfamily. Homodimer. It depends on pyridoxal 5'-phosphate as a cofactor.

The catalysed reaction is (sulfur carrier)-H + L-cysteine = (sulfur carrier)-SH + L-alanine. Inhibited by equimolar concentrations of p-chloromercuribenzoic acid, iodoacetamide or N-ethylmaleimide. Functionally, catalyzes the removal of elemental sulfur atoms from cysteine to produce alanine. Seems to participate in the biosynthesis of the nitrogenase metalloclusters by providing the inorganic sulfur required for the Fe-S core formation. The chain is Cysteine desulfurase NifS from Azotobacter vinelandii.